Here is a 201-residue protein sequence, read N- to C-terminus: 3-isopropylmalate dehydratase small subunit (201 aa).

It belongs to the LeuD family. LeuD type 1 subfamily. As to quaternary structure, heterodimer of LeuC and LeuD.

It carries out the reaction (2R,3S)-3-isopropylmalate = (2S)-2-isopropylmalate. It participates in amino-acid biosynthesis; L-leucine biosynthesis; L-leucine from 3-methyl-2-oxobutanoate: step 2/4. Functionally, catalyzes the isomerization between 2-isopropylmalate and 3-isopropylmalate, via the formation of 2-isopropylmaleate. This is 3-isopropylmalate dehydratase small subunit from Klebsiella pneumoniae (strain 342).